The primary structure comprises 368 residues: F-box only protein 28 (368 aa).

Over residues 1–11 (MAAASEERMAE) the composition is skewed to basic and acidic residues. Residues 1-56 (MAAASEERMAEEGGGGHGDGGSCSAAGSAQRQPPAPPSQAPPPGSQAPAAPALAPD) form a disordered region. A compositionally biased stretch (gly residues) spans 12–21 (EGGGGHGDGG). Residues 22–32 (SCSAAGSAQRQ) are compositionally biased toward low complexity. The span at 33–45 (PPAPPSQAPPPGS) shows a compositional bias: pro residues. Low complexity predominate over residues 46–55 (QAPAAPALAP). In terms of domain architecture, F-box spans 61–109 (NNTLVALPIVAIENILSFMSYDEISQLRLVCKRMDLVCQRMLNQGFLKV). 2 positions are modified to phosphoserine: serine 235 and serine 242. Threonine 270 is subject to Phosphothreonine. The disordered stretch occupies residues 328-368 (MESAVGTSSGSGQSEESPRKRRKATEAIDSLRKSKRLRNRK). Residue serine 344 is modified to Phosphoserine.

Part of a SCF (SKP1-cullin-F-box) protein ligase complex.

Its subcellular location is the chromosome. It localises to the centromere. It is found in the kinetochore. Probably recognizes and binds to some phosphorylated proteins and promotes their ubiquitination and degradation. This is F-box only protein 28 (Fbxo28) from Mus musculus (Mouse).